Reading from the N-terminus, the 205-residue chain is Outer-membrane lipoprotein carrier protein (205 aa).

The N-terminal stretch at 1-21 (MRFLAVATMVVALMVPWSVRA) is a signal peptide.

It belongs to the LolA family. Monomer.

It is found in the periplasm. Its function is as follows. Participates in the translocation of lipoproteins from the inner membrane to the outer membrane. Only forms a complex with a lipoprotein if the residue after the N-terminal Cys is not an aspartate (The Asp acts as a targeting signal to indicate that the lipoprotein should stay in the inner membrane). The polypeptide is Outer-membrane lipoprotein carrier protein (Methylobacillus flagellatus (strain ATCC 51484 / DSM 6875 / VKM B-1610 / KT)).